We begin with the raw amino-acid sequence, 308 residues long: Ribosomal RNA large subunit methyltransferase F (308 aa).

Belongs to the methyltransferase superfamily. METTL16/RlmF family.

The protein localises to the cytoplasm. The enzyme catalyses adenosine(1618) in 23S rRNA + S-adenosyl-L-methionine = N(6)-methyladenosine(1618) in 23S rRNA + S-adenosyl-L-homocysteine + H(+). Its function is as follows. Specifically methylates the adenine in position 1618 of 23S rRNA. This chain is Ribosomal RNA large subunit methyltransferase F, found in Salmonella paratyphi A (strain ATCC 9150 / SARB42).